A 133-amino-acid chain; its full sequence is Putative elongation factor 1-delta-like protein (133 aa).

Positions 58 to 73 are enriched in low complexity; the sequence is SLAGSLGPGASSGPSG. Disordered regions lie at residues 58-77 and 89-133; these read SLAG…DHSE and NQRD…TSRG. Basic and acidic residues predominate over residues 89 to 102; that stretch reads NQRDLAERAGEELA.

It belongs to the EF-1-beta/EF-1-delta family.

The sequence is that of Putative elongation factor 1-delta-like protein (EEF1DP3) from Homo sapiens (Human).